We begin with the raw amino-acid sequence, 591 residues long: Uncoordinated protein 58 (591 aa).

Residues 1 to 24 (MFFYSPNVAPQPSSTSHRRPTLTH) are disordered. The chain crosses the membrane as a helical span at residues 184–204 (VILVSVLIGYLCLGAWILMLL). Asn-226 carries N-linked (GlcNAc...) asparagine glycosylation. Helical transmembrane passes span 289 to 309 (TFPTAILYVLTVLTTCGYGEV), 318 to 338 (VFSVAFALVGIPLMFITAADI), 400 to 420 (PIGAYVSCICIYCSIGSAMFI), 428 to 448 (FIHAFHFGFNLIVTVGLGDIV), and 453 to 473 (IFLSLIVAFVIVGLSVVTMCV).

It belongs to the two pore domain potassium channel (TC 1.A.1.8) family.

It localises to the membrane. Its function is as follows. Has a role in mobility, possibly in the transport of potassium in muscles. The sequence is that of Uncoordinated protein 58 from Caenorhabditis elegans.